Reading from the N-terminus, the 354-residue chain is Uroporphyrinogen decarboxylase (354 aa).

Substrate contacts are provided by residues 27–31 (RQAGR), Asp-77, Tyr-154, Thr-209, and His-327.

It belongs to the uroporphyrinogen decarboxylase family. As to quaternary structure, homodimer.

It is found in the cytoplasm. It catalyses the reaction uroporphyrinogen III + 4 H(+) = coproporphyrinogen III + 4 CO2. It functions in the pathway porphyrin-containing compound metabolism; protoporphyrin-IX biosynthesis; coproporphyrinogen-III from 5-aminolevulinate: step 4/4. Its function is as follows. Catalyzes the decarboxylation of four acetate groups of uroporphyrinogen-III to yield coproporphyrinogen-III. The protein is Uroporphyrinogen decarboxylase of Mannheimia succiniciproducens (strain KCTC 0769BP / MBEL55E).